Here is a 211-residue protein sequence, read N- to C-terminus: Redox-sensing transcriptional repressor Rex (211 aa).

The segment at residues 16–55 (LYYRYLLILNEEGKDKVSSTELSEAVQVDSASIRRDFSYF) is a DNA-binding region (H-T-H motif). Position 90 to 95 (90 to 95 (GVGNLG)) interacts with NAD(+).

It belongs to the transcriptional regulatory Rex family. In terms of assembly, homodimer.

It localises to the cytoplasm. Modulates transcription in response to changes in cellular NADH/NAD(+) redox state. The chain is Redox-sensing transcriptional repressor Rex from Lactobacillus acidophilus (strain ATCC 700396 / NCK56 / N2 / NCFM).